A 563-amino-acid chain; its full sequence is MTTINYNENINNNNNTLESFGIEEWLINNLKEQSIINLFPVQQEIVPFINRTEGHDICVCAPTGSGKTLAYAIPLVQKIVKRVVRRVRVAVIVPTHDLVIQVEKTFQSIIKGTDLVVLSLGVKPFHIEQKLLIKNHSYGEHALYESLVDIIVSTPGRIVDHINETLGFTLKYLNYLVIDEADRLLRQSFQDWLEIVIDSTNQHSDLNQQQEEQLIKYNSKGDIELFEKSISLKDNNNQMNHLCWSEFKLVKLLLSATMTYNPSKISLLQLNAPLFFTTSKTKEIKYSMPSTLKECYIISNGDQKPLVLLNIIYESLLKNNANGENKKKIICFTKSVDITHRLNTLLKLIGQVDKLKFTCEEYSSSLSTVERADLLSRFKLNQIDILICSDIMSRGMDIQDIDVVINYNTPPNITLYVHRVGRTARAGNFGVSYTIVDKSEIKYYISMMKKAERSQTLHCLKWKPNVYEKFQSSYKLGLNQMRLIYSKRKINDIGDNGDDNNDNNNEDGNEIDGSVENIENNNNNNNNNNKNNNNNNFEKDYEVKLKHSLLEISKKKAKINFNI.

The Q motif motif lies at 15 to 43; that stretch reads NTLESFGIEEWLINNLKEQSIINLFPVQQ. Residues 48 to 276 enclose the Helicase ATP-binding domain; that stretch reads FINRTEGHDI…LLQLNAPLFF (229 aa). 61-68 lines the ATP pocket; that stretch reads APTGSGKT. The DEAD box signature appears at 179-182; the sequence is DEAD. Residues 308 to 482 enclose the Helicase C-terminal domain; that stretch reads LLNIIYESLL…SYKLGLNQMR (175 aa). Residues 493–537 form a disordered region; sequence IGDNGDDNNDNNNEDGNEIDGSVENIENNNNNNNNNNKNNNNNNF. Residues 495-510 are compositionally biased toward acidic residues; that stretch reads DNGDDNNDNNNEDGNE. Over residues 520-536 the composition is skewed to low complexity; sequence NNNNNNNNNNKNNNNNN.

It belongs to the DEAD box helicase family. DDX51/DBP6 subfamily.

Its subcellular location is the nucleus. The protein resides in the nucleolus. The catalysed reaction is ATP + H2O = ADP + phosphate + H(+). In terms of biological role, probable ATP-binding RNA helicase which may be involved in ribosome biogenesis. The polypeptide is Probable ATP-dependent RNA helicase ddx51 (ddx51) (Dictyostelium discoideum (Social amoeba)).